The following is a 659-amino-acid chain: Cytochrome bo(3) ubiquinol oxidase subunit 1 (659 aa).

Residues 1–14 (MFGKLTLKAIPVDE) lie on the Extracellular side of the membrane. The helical transmembrane segment at 15–35 (PIIMVTYISIILIALFISFSI) threads the bilayer. Over 36 to 58 (TYFKKWKYLWYEWFTTVDHKKIS) the chain is Cytoplasmic. A helical membrane pass occupies residues 59 to 79 (IMYGILAFIMLFRGFVDAILM). The a ubiquinone site is built by arginine 71, aspartate 75, and histidine 98. The Extracellular segment spans residues 80–106 (RTQQVIASSGNTGFLPPHHYDQIFTAH). Histidine 106 contributes to the heme b binding site. The chain crosses the membrane as a helical span at residues 107 to 127 (GVIMIFFVAMPLVIGLMNLVV). Topologically, residues 128–145 (PLQIGARDVAFPFLNNLS) are cytoplasmic. Residues 146–166 (FWLNVSGAILLTLSLGIGEFA) form a helical membrane-spanning segment. Residues 167–189 (QTGWLAYPPLSEVKYSPGVGVDY) lie on the Extracellular side of the membrane. Tryptophan 170 contributes to the heme b binding site. A helical membrane pass occupies residues 190–210 (WIWSLQISGVGTTLTGINFLI). Residues 211-225 (TILKMRAPGMCFFKM) lie on the Cytoplasmic side of the membrane. The helical transmembrane segment at 226-246 (PVFTWAALCTNILIVISFPVL) threads the bilayer. Topologically, residues 247–277 (TTTLLLLTLDRCFDFHFFTNNFGGNPMMYVN) are extracellular. Residues 278–298 (LIWIWGHPEVYILVLPVFGVF) traverse the membrane as a helical segment. Histidine 284 provides a ligand contact to Cu(2+). The 1'-histidyl-3'-tyrosine (His-Tyr) cross-link spans 284–288 (HPEVY). Residue tyrosine 288 participates in Fe(II)-heme o binding. Residues 299-309 (SEVVATFSKKR) lie on the Cytoplasmic side of the membrane. The chain crosses the membrane as a helical span at residues 310–330 (LFGYVSLVWATLAITILSFIV). The Extracellular portion of the chain corresponds to 331 to 347 (WLHHFFTMGAGSNVNAF). 2 residues coordinate Cu(2+): histidine 333 and histidine 334. The chain crosses the membrane as a helical span at residues 348–368 (FGITTMIIAIPTGVKIFNWLF). The Cytoplasmic portion of the chain corresponds to 369-380 (TMYQGRVHMHSS). Residues 381–401 (MLWTIGFLITFSIGGMTGVLL) traverse the membrane as a helical segment. The Extracellular portion of the chain corresponds to 402–413 (SIPPADFILHNS). Fe(II)-heme o contacts are provided by histidine 411 and histidine 419. Residues 414-434 (LFLVAHFHNVIIGGVVFGCFA) traverse the membrane as a helical segment. Histidine 421 lines the heme b pocket. Residues 435–456 (GINYWFPKLFGFILNELWGKRA) lie on the Cytoplasmic side of the membrane. The chain crosses the membrane as a helical span at residues 457-477 (FWFWIIGFFTAFMPLYFLGFM). Residues 478–490 (GMTRRLSQNIDIE) lie on the Extracellular side of the membrane. Heme b-binding residues include arginine 481 and arginine 482. Residues 491–511 (FHFLLSIAAIGAILIGIGILC) form a helical membrane-spanning segment. Residues 512-580 (QIIQFWVSVR…KNQVQKKQYS (69 aa)) are Cytoplasmic-facing. A helical membrane pass occupies residues 581-601 (AIHMPKNTGLGIFISFFSLLF). Over 602-605 (GFSA) the chain is Extracellular. Residues 606 to 626 (VWNIIWLSFLSFLVVIISLIF) form a helical membrane-spanning segment. Residues 627 to 659 (KSIDENTEYTVSVKEIESIENRHLENVQKAGLK) lie on the Cytoplasmic side of the membrane.

This sequence belongs to the heme-copper respiratory oxidase family. In terms of assembly, the cytochrome bo(3) ubiquinol oxidase complex is a heterooctamer of two A chains, two B chains, two C chains and two D chains. It depends on Cu(2+) as a cofactor. Heme b serves as cofactor. Fe(II)-heme o is required as a cofactor.

The protein resides in the cell membrane. The enzyme catalyses 2 a ubiquinol + O2 + n H(+)(in) = 2 a ubiquinone + 2 H2O + n H(+)(out). Cytochrome bo(3) ubiquinol oxidase is the terminal enzyme in the aerobic respiratory chain. Catalyzes the four-electron reduction of O2 to water, using a ubiquinol as a membrane soluble electron donor for molecular oxygen reduction. Has proton pump activity across the membrane in addition to electron transfer, pumping 2 protons/electron and generating a proton motive force. All the redox centers of this enzyme complex are located within the largest subunit, subunit I. Protons are probably pumped via D- and K- channels found in this subunit. The polypeptide is Cytochrome bo(3) ubiquinol oxidase subunit 1 (cyoB) (Buchnera aphidicola subsp. Schizaphis graminum (strain Sg)).